Here is a 444-residue protein sequence, read N- to C-terminus: Acyl-CoA (8-3)-desaturase (444 aa).

At methionine 1 the chain carries N-acetylmethionine. Residues 1 to 121 are Cytoplasmic-facing; that stretch reads MAPDPVAAKT…FRELRATVEQ (121 aa). Residues 17 to 94 enclose the Cytochrome b5 heme-binding domain; it reads PRYFTWDEVA…MNSLLIGELS (78 aa). A helical membrane pass occupies residues 122-142; it reads MGLMKANHVFFLLYLLHILLL. Topologically, residues 143 to 146 are lumenal; the sequence is DGAA. A helical transmembrane segment spans residues 147–167; sequence WLTLWIFGTSFLPFLLCAVLL. The Cytoplasmic segment spans residues 168 to 267; that stretch reads TAAQIQAGWL…PYNHQHKYFF (100 aa). Positions 179–183 match the Histidine box-1 motif; sequence HDLGH. A Histidine box-2 motif is present at residues 216 to 220; the sequence is HFQHH. The chain crosses the membrane as a helical span at residues 268–288; the sequence is LIGPPALVPFFFQWYVFYFVI. Over 289–305 the chain is Lumenal; the sequence is QRKKWVDLAWMITFYIR. Residues 306–326 form a helical membrane-spanning segment; that stretch reads LLLTYVPLLGLKAFLGLYFIV. The Cytoplasmic portion of the chain corresponds to 327 to 444; that stretch reads RFLESNWFVW…QLWLDAYLHQ (118 aa). The Histidine box-3 motif lies at 382-386; it reads QIEHH.

Belongs to the fatty acid desaturase type 1 family. Widely expressed. Expressed in brain, liver and thymus (at protein level). Isoform 1 seems to be more abundant than isoform 2. Expression of isoform 2 is very low in spleen and not detectable in skeletal muscle.

The protein resides in the endoplasmic reticulum membrane. The protein localises to the mitochondrion. The enzyme catalyses (8Z,11Z,14Z)-eicosatrienoyl-CoA + 2 Fe(II)-[cytochrome b5] + O2 + 2 H(+) = (5Z,8Z,11Z,14Z)-eicosatetraenoyl-CoA + 2 Fe(III)-[cytochrome b5] + 2 H2O. The catalysed reaction is (8Z,11Z,14Z,17Z)-eicosatetraenoyl-CoA + 2 Fe(II)-[cytochrome b5] + O2 + 2 H(+) = (5Z,8Z,11Z,14Z,17Z)-eicosapentaenoyl-CoA + 2 Fe(III)-[cytochrome b5] + 2 H2O. It carries out the reaction (11E)-octadecenoyl-CoA + 2 Fe(II)-[cytochrome b5] + O2 + 2 H(+) = (5Z,11E)-octadecadienoyl-CoA + 2 Fe(III)-[cytochrome b5] + 2 H2O. It participates in lipid metabolism; polyunsaturated fatty acid biosynthesis. In terms of biological role, acts as a front-end fatty acyl-coenzyme A (CoA) desaturase that introduces a cis double bond at carbon 5 located between a preexisting double bond and the carboxyl end of the fatty acyl chain. Involved in biosynthesis of highly unsaturated fatty acids (HUFA) from the essential polyunsaturated fatty acids (PUFA) linoleic acid (LA) (18:2n-6) and alpha-linolenic acid (ALA) (18:3n-3) precursors. Specifically, desaturates dihomo-gamma-linoleoate (DGLA) (20:3n-6) and eicosatetraenoate (ETA) (20:4n-3) to generate arachidonate (AA) (20:4n-6) and eicosapentaenoate (EPA) (20:5n-3), respectively. As a rate limiting enzyme for DGLA (20:3n-6) and AA (20:4n-6)-derived eicosanoid biosynthesis, controls the metabolism of inflammatory lipids like prostaglandin E2, critical for efficient acute inflammatory response and maintenance of epithelium homeostasis. Contributes to membrane phospholipid biosynthesis by providing AA (20:4n-6) as a major acyl chain esterified into phospholipids. In particular, regulates phosphatidylinositol-4,5-bisphosphate levels, modulating inflammatory cytokine production in T-cells. Also desaturates (11E)-octadecenoate (trans-vaccenoate)(18:1n-9), a metabolite in the biohydrogenation pathway of LA (18:2n-6). Functionally, does not exhibit any catalytic activity toward 20:3n-6, but it may enhance FADS2 activity. The chain is Acyl-CoA (8-3)-desaturase from Papio anubis (Olive baboon).